Consider the following 107-residue polypeptide: Iron-binding protein IscA (107 aa).

3 residues coordinate Fe cation: Cys-35, Cys-99, and Cys-101.

This sequence belongs to the HesB/IscA family. Homodimer; may form tetramers and higher multimers. Fe cation serves as cofactor.

Its function is as follows. Is able to transfer iron-sulfur clusters to apo-ferredoxin. Multiple cycles of [2Fe2S] cluster formation and transfer are observed, suggesting that IscA acts catalytically. Recruits intracellular free iron so as to provide iron for the assembly of transient iron-sulfur cluster in IscU in the presence of IscS, L-cysteine and the thioredoxin reductase system TrxA/TrxB. This chain is Iron-binding protein IscA, found in Serratia proteamaculans (strain 568).